The sequence spans 366 residues: UDP-N-acetylglucosamine--N-acetylmuramyl-(pentapeptide) pyrophosphoryl-undecaprenol N-acetylglucosamine transferase (366 aa).

UDP-N-acetyl-alpha-D-glucosamine contacts are provided by residues 14–16 (TGG), Asn-125, Arg-168, Ser-196, and Gln-297.

This sequence belongs to the glycosyltransferase 28 family. MurG subfamily.

It localises to the cell inner membrane. The catalysed reaction is di-trans,octa-cis-undecaprenyl diphospho-N-acetyl-alpha-D-muramoyl-L-alanyl-D-glutamyl-meso-2,6-diaminopimeloyl-D-alanyl-D-alanine + UDP-N-acetyl-alpha-D-glucosamine = di-trans,octa-cis-undecaprenyl diphospho-[N-acetyl-alpha-D-glucosaminyl-(1-&gt;4)]-N-acetyl-alpha-D-muramoyl-L-alanyl-D-glutamyl-meso-2,6-diaminopimeloyl-D-alanyl-D-alanine + UDP + H(+). It participates in cell wall biogenesis; peptidoglycan biosynthesis. Its function is as follows. Cell wall formation. Catalyzes the transfer of a GlcNAc subunit on undecaprenyl-pyrophosphoryl-MurNAc-pentapeptide (lipid intermediate I) to form undecaprenyl-pyrophosphoryl-MurNAc-(pentapeptide)GlcNAc (lipid intermediate II). The sequence is that of UDP-N-acetylglucosamine--N-acetylmuramyl-(pentapeptide) pyrophosphoryl-undecaprenol N-acetylglucosamine transferase from Rhodopseudomonas palustris (strain ATCC BAA-98 / CGA009).